The sequence spans 63 residues: Large ribosomal subunit protein uL29 (63 aa).

Belongs to the universal ribosomal protein uL29 family.

The sequence is that of Large ribosomal subunit protein uL29 from Proteus mirabilis (strain HI4320).